The sequence spans 227 residues: Ribonuclease S-5 (227 aa).

The signal sequence occupies residues 1–27 (MGITGMVYVVTMVFLLIVLILSSSTVG). Gln-36 provides a ligand contact to RNA. A disulfide bridge links Cys-42 with Cys-49. An N-linked (GlcNAc...) asparagine glycan is attached at Asn-45. Residues His-60, 97–98 (NV), Phe-107, 110–111 (KE), and 114–115 (KH) each bind RNA. The active-site Proton donor is the His-60. Cysteines 75 and 118 form a disulfide. Residue Glu-111 is part of the active site. The active-site Proton acceptor is His-115. Asn-143 is a glycosylation site (N-linked (GlcNAc...) asparagine). 2 cysteine pairs are disulfide-bonded: Cys-182–Cys-220 and Cys-197–Cys-208.

Belongs to the RNase T2 family. Post-translationally, N-glycan at Asn-45 consists of disaccharide (GlcNAc-GlcNAc). N-linked core structure at Asn-143 contains xylose.

It catalyses the reaction a ribonucleotidyl-ribonucleotide-RNA + H2O = a 3'-end 3'-phospho-ribonucleotide-RNA + a 5'-end dephospho-ribonucleoside-RNA + H(+). Its function is as follows. Self-incompatibility (SI) is the inherited ability of a flowering plant to prevent self-fertilization by discriminating between self and non-self pollen during pollination. In many species, self-incompatibility is controlled by the single, multiallelic locus S. This is Ribonuclease S-5 from Pyrus pyrifolia (Chinese pear).